Reading from the N-terminus, the 328-residue chain is MQPQRVVITPGEPAGIGPELVVQLAQRSWPVELVVCADATLLQDRANMLGLPLRLLPYRADQPPVPQQQGTLTLLPVVLRKPATPGVLSTDNGHYVVDTLARACDGCLNGEFAALITGPVHKGVINEAGVPFTGHTEFFEERSHSDNVVMMLATEELRVALATTHLPLKAISDAITPALLREIITILHHDLRTKFGIADPHVLVCGLNPHAGEGGHMGTEEIDTIIPVLNEMRAKGMNLSGPLPADTLFQPKYLDSADAVLAMYHDQGLPVLKYQGFGRAVNITLGLPFIRTSVDHGTALDLAGKGKADVGSFITALNLAIKMIVNTQ.

Substrate is bound by residues H135 and T136. A divalent metal cation is bound by residues H165, H210, and H265. K273, N282, and R291 together coordinate substrate.

The protein belongs to the PdxA family. As to quaternary structure, homodimer. Zn(2+) is required as a cofactor. Requires Mg(2+) as cofactor. Co(2+) serves as cofactor.

It localises to the cytoplasm. The enzyme catalyses 4-(phosphooxy)-L-threonine + NAD(+) = 3-amino-2-oxopropyl phosphate + CO2 + NADH. Its pathway is cofactor biosynthesis; pyridoxine 5'-phosphate biosynthesis; pyridoxine 5'-phosphate from D-erythrose 4-phosphate: step 4/5. Catalyzes the NAD(P)-dependent oxidation of 4-(phosphooxy)-L-threonine (HTP) into 2-amino-3-oxo-4-(phosphooxy)butyric acid which spontaneously decarboxylates to form 3-amino-2-oxopropyl phosphate (AHAP). The polypeptide is 4-hydroxythreonine-4-phosphate dehydrogenase (Enterobacter sp. (strain 638)).